The primary structure comprises 319 residues: MKKSITSLDLNLLLCLQLLMQERSVTKAAKRMNVTPSAVSKSLSKLRTWFDDPLFVNTPLGLTPTPLMVNMEQSLADWMQMSNQLLDKPHHESPRGLKFELAAESPLVMIMFNSLSQQIYQRYPQATIKVRNWDYDSLDAITRGEVDLGFTGRESHPRSRELLSLLPLSIDFEVLFSDLPWVWLREDHPALQEEWNLETFLRYPHISICWEQSDTWALDDVLQEMGRKRNIALSLPGFEQSLFMAAQPNHSLLATAPLYCQRYNQLHQLPLVARPLPFDAAQREKLMVPFTLLWHKRNSHNPKIIWLKETIKTLYSHLS.

The HTH lysR-type domain maps to 8–65 (LDLNLLLCLQLLMQERSVTKAAKRMNVTPSAVSKSLSKLRTWFDDPLFVNTPLGLTPT). The segment at residues 25–44 (VTKAAKRMNVTPSAVSKSLS) is a DNA-binding region (H-T-H motif).

It belongs to the LysR transcriptional regulatory family.

Its function is as follows. Involved in anaerobic NO protection. In Citrobacter koseri (strain ATCC BAA-895 / CDC 4225-83 / SGSC4696), this protein is HTH-type transcriptional regulator YidZ.